Here is a 275-residue protein sequence, read N- to C-terminus: Undecaprenyl-diphosphatase 2 (275 aa).

7 helical membrane-spanning segments follow: residues 48 to 68 (NAYV…ALLF), 90 to 110 (GLTL…GLLF), 117 to 137 (IFHV…MIAA), 154 to 174 (ISYK…WPGF), 195 to 215 (ANFT…LSLI), 223 to 243 (ISLL…SLVV), and 254 to 274 (IKLV…LFLF).

Belongs to the UppP family.

It is found in the cell membrane. It catalyses the reaction di-trans,octa-cis-undecaprenyl diphosphate + H2O = di-trans,octa-cis-undecaprenyl phosphate + phosphate + H(+). Catalyzes the dephosphorylation of undecaprenyl diphosphate (UPP). Confers resistance to bacitracin. The protein is Undecaprenyl-diphosphatase 2 of Shouchella clausii (strain KSM-K16) (Alkalihalobacillus clausii).